We begin with the raw amino-acid sequence, 748 residues long: Translation factor GUF1 homolog 1, mitochondrial (748 aa).

A mitochondrion-targeting transit peptide spans 1-29 (MRVGCCLLLKPIRQRLCTASISSRHIMRW). The tr-type G domain maps to 94-276 (SHIRNFAVVA…AIIERVPPPT (183 aa)). GTP is bound by residues 103 to 110 (AHVDHGKT), 167 to 171 (DTPGH), and 221 to 224 (TKMD).

The protein belongs to the TRAFAC class translation factor GTPase superfamily. Classic translation factor GTPase family. LepA subfamily.

Its subcellular location is the mitochondrion inner membrane. The enzyme catalyses GTP + H2O = GDP + phosphate + H(+). Its function is as follows. Promotes mitochondrial protein synthesis. May act as a fidelity factor of the translation reaction, by catalyzing a one-codon backward translocation of tRNAs on improperly translocated ribosomes. Binds to mitochondrial ribosomes in a GTP-dependent manner. This Trypanosoma cruzi (strain CL Brener) protein is Translation factor GUF1 homolog 1, mitochondrial.